The sequence spans 399 residues: Cytochrome P450 FAS1 (399 aa).

Cys349 is a heme binding site.

The protein belongs to the cytochrome P450 family. Requires heme as cofactor.

It localises to the cytoplasm. Functionally, may be involved in the biosynthesis of cytokinin phytohormones and in host plant fasciation (leafy gall). In Rhodococcoides fascians (Rhodococcus fascians), this protein is Cytochrome P450 FAS1 (fas1).